Reading from the N-terminus, the 480-residue chain is Ribosome assembly protein rrb1 (480 aa).

Disordered stretches follow at residues 1–78 (MSKR…WLPG) and 155–176 (QHDE…ILEH). Composition is skewed to acidic residues over residues 28-52 (VDTE…YIEA) and 158-172 (ENDD…EEDP). 2 positions are modified to phosphoserine: Ser-163 and Ser-166. WD repeat units lie at residues 183–225 (GACN…RSLD), 289–329 (SHTA…KTSA), 334–375 (AHPG…SSSS), 385–425 (WHRA…DEEE), and 446–480 (MGQQ…TITF).

In terms of assembly, associates with ribosomal protein L3.

The protein resides in the cytoplasm. The protein localises to the nucleus. It is found in the nucleolus. Its function is as follows. Involved in regulation of L3 expression and stability and plays a role in early 60S ribosomal subunit assembly. May be required for proper assembly of pre-ribosomal particles during early ribosome biogenesis, presumably by targeting L3 onto the 35S precursor rRNA. The sequence is that of Ribosome assembly protein rrb1 (rrb1) from Schizosaccharomyces pombe (strain 972 / ATCC 24843) (Fission yeast).